A 678-amino-acid chain; its full sequence is DNA ligase (678 aa).

NAD(+)-binding positions include 47-51 (DSDYD), 96-97 (SL), and Glu-122. Catalysis depends on Lys-124, which acts as the N6-AMP-lysine intermediate. NAD(+)-binding residues include Arg-145, Glu-182, Lys-300, and Lys-324. Zn(2+) is bound by residues Cys-418, Cys-421, Cys-436, and Cys-442. A BRCT domain is found at 602 to 678 (AYNESFTGKT…ILEDNLKDLL (77 aa)).

The protein belongs to the NAD-dependent DNA ligase family. LigA subfamily. Requires Mg(2+) as cofactor. Mn(2+) is required as a cofactor.

The catalysed reaction is NAD(+) + (deoxyribonucleotide)n-3'-hydroxyl + 5'-phospho-(deoxyribonucleotide)m = (deoxyribonucleotide)n+m + AMP + beta-nicotinamide D-nucleotide.. Functionally, DNA ligase that catalyzes the formation of phosphodiester linkages between 5'-phosphoryl and 3'-hydroxyl groups in double-stranded DNA using NAD as a coenzyme and as the energy source for the reaction. It is essential for DNA replication and repair of damaged DNA. This Francisella tularensis subsp. novicida (strain U112) protein is DNA ligase.